The following is a 435-amino-acid chain: Indole diterpene prenyltransferase atmD (435 aa).

L-tryptophan is bound by residues A81–Y82 and E90. The substrate site is built by R103, K190, R261, K263, Y265, Y346, and Y413.

Belongs to the tryptophan dimethylallyltransferase family.

Functionally, indole diterpene prenyltransferase; part of the ATM2 gene cluster that mediates the biosynthesis of aflatrem, a tremorgenic mycotoxin with acute neurotoxic effects. Synthesis of geranylgeranyl diphosphate (GGPP) by AtmG (a GGPP synthase) precedes condensation of GGPP with indole 3-glycerol phosphate, followed by epoxidation and cyclization by AtmM (a FAD-dependent monooxygenase) and AtmC (a prenyltransferase) to produce paspaline. AtmB is also essential for paspaline production, but its exact role has not been identified yet. AtmP, a cytochrome P450 monooxygenase, subsequently converts paspaline to 13-desoxypaxilline via PC-M6 by removal of the C-30 methyl group and oxidation at C-10. AtmQ, a cytochrome P450 monooxygenase, then catalyzes the oxidation of 13-desoxypaxilline, first at C-7 to produce paspalicine and then at C-13 to form paspalinine. Finally, AtmD prenylates paspalinine to form aflatrem. The polypeptide is Indole diterpene prenyltransferase atmD (Aspergillus flavus).